The primary structure comprises 771 residues: Probable aconitate hydratase, mitochondrial (771 aa).

Residues glutamine 86 and 179–181 each bind substrate; that span reads DSH. The [4Fe-4S] cluster site is built by cysteine 372, cysteine 435, and cysteine 438. Substrate contacts are provided by residues arginine 461, arginine 466, arginine 594, and 657–658; that span reads SR.

Belongs to the aconitase/IPM isomerase family. As to quaternary structure, monomer. It depends on [4Fe-4S] cluster as a cofactor.

The protein localises to the mitochondrion. It carries out the reaction citrate = D-threo-isocitrate. It participates in carbohydrate metabolism; tricarboxylic acid cycle; isocitrate from oxaloacetate: step 2/2. Catalyzes the isomerization of citrate to isocitrate via cis-aconitate. The sequence is that of Probable aconitate hydratase, mitochondrial (aco2) from Dictyostelium discoideum (Social amoeba).